Consider the following 408-residue polypeptide: Glucose-1-phosphate adenylyltransferase (408 aa).

Residues Tyr100, Gly165, 180 to 181 (EK), and Ser198 each bind alpha-D-glucose 1-phosphate.

This sequence belongs to the bacterial/plant glucose-1-phosphate adenylyltransferase family. Homotetramer.

The catalysed reaction is alpha-D-glucose 1-phosphate + ATP + H(+) = ADP-alpha-D-glucose + diphosphate. It participates in glycan biosynthesis; glycogen biosynthesis. Its function is as follows. Involved in the biosynthesis of ADP-glucose, a building block required for the elongation reactions to produce glycogen. Catalyzes the reaction between ATP and alpha-D-glucose 1-phosphate (G1P) to produce pyrophosphate and ADP-Glc. The sequence is that of Glucose-1-phosphate adenylyltransferase from Cutibacterium acnes (strain DSM 16379 / KPA171202) (Propionibacterium acnes).